Here is a 671-residue protein sequence, read N- to C-terminus: Talaropentaene synthase (671 aa).

Position 92 (aspartate 92) interacts with Mg(2+). The DDXXD 1 motif lies at 92 to 96 (DDMTD). Residues 223–231 (NDLYSYEKE) carry the NSE/DTE motif. The isopentenyl diphosphate site is built by lysine 389, arginine 392, and histidine 421. Aspartate 428 and aspartate 432 together coordinate Mg(2+). The DDXXD 2 signature appears at 428-432 (DDIED). Arginine 437 is a binding site for dimethylallyl diphosphate. Arginine 438 is an isopentenyl diphosphate binding site. Residues lysine 515, threonine 516, glutamine 551, asparagine 558, lysine 568, and lysine 578 each coordinate dimethylallyl diphosphate.

In the N-terminal section; belongs to the terpene synthase family. The protein in the C-terminal section; belongs to the FPP/GGPP synthase family. The cofactor is Mg(2+).

It catalyses the reaction 5 isopentenyl diphosphate + dimethylallyl diphosphate = all-trans-hexaprenyl diphosphate + 5 diphosphate. It carries out the reaction all-trans-hexaprenyl diphosphate = talaropentaene + diphosphate. Bifunctional terpene synthase that converts dimethylallyl diphosphate (DMAPP) and isopentenyl diphosphate (IPP) into talaropentaene as a single product. The C-terminal prenyltransferase (PT) domain of MpMS catalyzes formation of hexaprenyl diphosphate (HexPP), whereas the N-terminal terpene cyclase (TC) domain catalyzes the cyclization of HexPP to talaropentaene. This is Talaropentaene synthase from Talaromyces verruculosus (Penicillium verruculosum).